A 282-amino-acid polypeptide reads, in one-letter code: Homeobox-leucine zipper protein HAT1 (282 aa).

Positions 71–134 are disordered; sequence LEEETGVSSP…EEDYGGETCR (64 aa). Residues 76–89 show a composition bias toward low complexity; that stretch reads GVSSPNSTISSTVS. The homeobox DNA-binding region spans 132 to 191; that stretch reads TCRKKLRLSKDQSAVLEDTFKEHNTLNPKQKLALAKKLGLTARQVEVWFQNRRARTKLKQ. Residues 199 to 220 are leucine-zipper; that stretch reads LKRCVEKLTEENRRLEKEAAEL.

Belongs to the HD-ZIP homeobox family. Class II subfamily. As to quaternary structure, interacts with BZIP30.

The protein localises to the nucleus. In terms of biological role, probable transcription factor. This chain is Homeobox-leucine zipper protein HAT1 (HAT1), found in Arabidopsis thaliana (Mouse-ear cress).